Reading from the N-terminus, the 400-residue chain is Pectinesterase B (400 aa).

Substrate contacts are provided by Thr171 and Gln205. Asp228 acts as the Proton donor in catalysis. Asp261 serves as the catalytic Nucleophile. Substrate contacts are provided by Arg325 and Trp327.

The protein belongs to the pectinesterase family.

It carries out the reaction [(1-&gt;4)-alpha-D-galacturonosyl methyl ester](n) + n H2O = [(1-&gt;4)-alpha-D-galacturonosyl](n) + n methanol + n H(+). Its pathway is glycan metabolism; pectin degradation; 2-dehydro-3-deoxy-D-gluconate from pectin: step 1/5. The protein is Pectinesterase B (pemB) of Pectobacterium parmentieri.